A 384-amino-acid polypeptide reads, in one-letter code: Urea transporter 1 (384 aa).

E39 is modified (phosphoserine). 5 helical membrane passes run 61-81, 85-105, 111-131, 138-158, and 168-188; these read ISQV…VGLL, PWWA…ALLL, AIAA…MAVF, FWWL…FSSA, and LPVF…ATGH. A glycan (N-linked (GlcNAc...) asparagine) is linked at N206. Helical transmembrane passes span 250–270, 276–296, 305–325, and 327–347; these read LMCL…LSLA, IYFG…GGMF, LLAL…AHLM, and VVHL…FLLL.

This sequence belongs to the urea transporter family. In terms of assembly, homotrimer; each subunit contains a pore through which urea permeates. Identified in a complex with STOM. Post-translationally, N-glycosylated in red blood cells, as well as in most non-erythroid tissues, except in the gastrocnemius muscle and in the gastrointestinal tract, including liver, colon and stomach. Expressed in brain, kidney, heart, liver, lung, skeletal muscle, spleen, testis, ureter and urinary bladder (at protein level). Along the gastrointestinal tract, detected in colon, jejunum and stomach (at protein level). In the kidney, expressed in some microvessels of the inner and outer medulla, but not all (at protein level). Not detected in the cortex (at protein level). Detected in the urothelium all along the urinary tract, including the papilla surface, the ureter, the bladder and the urethra (at protein level). In the brain, expressed at the border of the corpus callosum and striatum in astrocytic cellular processes surrounding blood microvessels (at protein level). Detected in erythrocytes (at protein level).

The protein localises to the cell membrane. The protein resides in the basolateral cell membrane. The catalysed reaction is urea(in) = urea(out). Its function is as follows. Mediates the transport of urea driven by a concentration gradient across the cell membranes of erythrocytes and the renal inner medullary collecting duct which is critical to the urinary concentrating mechanism. Facilitates water transport in erythrocytes. In Mus musculus (Mouse), this protein is Urea transporter 1 (Slc14a1).